A 243-amino-acid polypeptide reads, in one-letter code: Zinc import ATP-binding protein ZnuC (243 aa).

Positions 8 to 225 (LNLSNVSYYI…SEFQKLFGHH (218 aa)) constitute an ABC transporter domain. 40 to 47 (GPNGAGKS) is an ATP binding site.

The protein belongs to the ABC transporter superfamily. Zinc importer (TC 3.A.1.15.5) family. The complex is composed of two ATP-binding proteins (ZnuC), two transmembrane proteins (ZnuB) and a solute-binding protein (ZnuA).

It is found in the cell inner membrane. It carries out the reaction Zn(2+)(out) + ATP(in) + H2O(in) = Zn(2+)(in) + ADP(in) + phosphate(in) + H(+)(in). Functionally, part of the ABC transporter complex ZnuABC involved in zinc import. Responsible for energy coupling to the transport system. In Psychrobacter arcticus (strain DSM 17307 / VKM B-2377 / 273-4), this protein is Zinc import ATP-binding protein ZnuC.